The chain runs to 319 residues: Cytochrome c biogenesis protein CcsA (319 aa).

The next 8 membrane-spanning stretches (helical) occupy residues 14-34 (AFGGLLIAMLVYWISLAFPGI), 36-56 (GLNRLATLITLLVNIALTLTL), 69-89 (SNLYESLLFLAWGLTFVHLFI), 97-117 (LIGATAIPVAMFVTAFASLAL), 142-162 (IMMLSYAILILGSLLSILFLI), 227-247 (TIGLGFPLLTIGIIAGAVWAN), 254-274 (WSWDPKETWALITWLIFAAYL), and 288-308 (AILASLGFLVVWICYLGVNFL).

Belongs to the CcmF/CycK/Ccl1/NrfE/CcsA family. As to quaternary structure, may interact with Ccs1.

It is found in the plastid. The protein resides in the chloroplast thylakoid membrane. Functionally, required during biogenesis of c-type cytochromes (cytochrome c6 and cytochrome f) at the step of heme attachment. This chain is Cytochrome c biogenesis protein CcsA, found in Pyropia yezoensis (Susabi-nori).